A 268-amino-acid chain; its full sequence is Myeloid leukemia factor 1 (268 aa).

Phosphoserine occurs at positions 6, 8, and 32. The interaction with COPS3 stretch occupies residues 50–125 (RVHNRRGHND…IGDEPPKVFQ (76 aa)). A disordered region spans residues 208-268 (PGRHNLENTR…KGSSVKSNKK (61 aa)). Basic and acidic residues-rich tracts occupy residues 226-237 (PGSRELKRREKP) and 244-257 (EHGR…DKLH).

This sequence belongs to the MLF family. In terms of assembly, interacts with CENPU. Also interacts with NRBP1/MADM, YWHAZ/14-3-3-zeta and HNRPUL2/MANP. NRBP1 recruits a serine kinase which phosphorylates both itself and MLF1. Phosphorylated MLF1 then binds to YWHAZ and is retained in the cytoplasm. Retained in the nucleus by binding to HNRPUL2. Binds to COPS3/CSN3 which is required for suppression of COP1 and activation of p53. Post-translationally, phosphorylation is required for binding to YWHAZ.

It localises to the cytoplasm. The protein localises to the nucleus. Its subcellular location is the cell projection. It is found in the cilium. The protein resides in the cytoskeleton. It localises to the cilium basal body. Functionally, involved in lineage commitment of primary hemopoietic progenitors by restricting erythroid formation and enhancing myeloid formation. Interferes with erythropoietin-induced erythroid terminal differentiation by preventing cells from exiting the cell cycle through suppression of CDKN1B/p27Kip1 levels. Suppresses COP1 activity via CSN3 which activates p53 and induces cell cycle arrest. Binds DNA and affects the expression of a number of genes so may function as a transcription factor in the nucleus. This chain is Myeloid leukemia factor 1 (MLF1), found in Pongo abelii (Sumatran orangutan).